Consider the following 183-residue polypeptide: Ubiquinol-cytochrome c reductase iron-sulfur subunit (183 aa).

A helical transmembrane segment spans residues 21–41; the sequence is LIYGTTAVGAVGVALAVWPFI. Positions 88 to 181 constitute a Rieske domain; the sequence is IVVARAVDPA…YAFTDDTTVL (94 aa). Positions 121, 123, 145, and 148 each coordinate [2Fe-2S] cluster. Residues Cys126 and Cys147 are joined by a disulfide bond.

This sequence belongs to the Rieske iron-sulfur protein family. As to quaternary structure, the main subunits of complex b-c1 are: cytochrome b, cytochrome c1 and the Rieske protein. The cofactor is [2Fe-2S] cluster.

The protein resides in the cell inner membrane. It carries out the reaction a quinol + 2 Fe(III)-[cytochrome c](out) = a quinone + 2 Fe(II)-[cytochrome c](out) + 2 H(+)(out). Functionally, component of the ubiquinol-cytochrome c reductase complex (complex III or cytochrome b-c1 complex), which is a respiratory chain that generates an electrochemical potential coupled to ATP synthesis. This chain is Ubiquinol-cytochrome c reductase iron-sulfur subunit (petA), found in Rhodospirillum rubrum.